A 213-amino-acid chain; its full sequence is Uridine kinase (213 aa).

Position 15–22 (15–22 (GGSGSGKT)) interacts with ATP.

Belongs to the uridine kinase family.

The protein localises to the cytoplasm. It carries out the reaction uridine + ATP = UMP + ADP + H(+). The catalysed reaction is cytidine + ATP = CMP + ADP + H(+). Its pathway is pyrimidine metabolism; CTP biosynthesis via salvage pathway; CTP from cytidine: step 1/3. It participates in pyrimidine metabolism; UMP biosynthesis via salvage pathway; UMP from uridine: step 1/1. This chain is Uridine kinase, found in Ligilactobacillus salivarius (strain UCC118) (Lactobacillus salivarius).